Consider the following 254-residue polypeptide: MLQTEMKVIQQTEIADKVYELILSGECVADMSPGQFLMLKPSRSDLLMRRPISICSYDKTAKTCILLYRVEGDGTKDFSSLSKGDSIDVLGPLGKGFDLNTIPAPKTALLIGGGIGVPPMYQLGKELADKGVQVTFVNGFQSEKDSFYEKEMTEYGTVHIATVDGSYGTQGFVTDITKNFPEEPDVIYSCGPKAMLQAVKASFPETKTYLSLEERMACGIGACYACVCPKAGDTKKQFKVCEDGPVFRADEVSL.

An FAD-binding FR-type domain is found at 1–99 (MLQTEMKVIQ…LGPLGKGFDL (99 aa)). FAD-binding positions include 50 to 53 (RPIS), 67 to 69 (LYR), and 74 to 75 (GT). Positions 218, 223, 226, and 241 each coordinate [2Fe-2S] cluster.

It belongs to the PyrK family. Heterotetramer of 2 PyrK and 2 PyrD type B subunits. [2Fe-2S] cluster serves as cofactor. It depends on FAD as a cofactor.

The protein operates within pyrimidine metabolism; UMP biosynthesis via de novo pathway; orotate from (S)-dihydroorotate (NAD(+) route): step 1/1. Its function is as follows. Responsible for channeling the electrons from the oxidation of dihydroorotate from the FMN redox center in the PyrD type B subunit to the ultimate electron acceptor NAD(+). This chain is Dihydroorotate dehydrogenase B (NAD(+)), electron transfer subunit, found in Listeria innocua serovar 6a (strain ATCC BAA-680 / CLIP 11262).